The primary structure comprises 158 residues: Protein-export protein SecB (158 aa).

It belongs to the SecB family. In terms of assembly, homotetramer, a dimer of dimers. One homotetramer interacts with 1 SecA dimer.

The protein localises to the cytoplasm. Its function is as follows. One of the proteins required for the normal export of preproteins out of the cell cytoplasm. It is a molecular chaperone that binds to a subset of precursor proteins, maintaining them in a translocation-competent state. It also specifically binds to its receptor SecA. In Yersinia pestis (strain Pestoides F), this protein is Protein-export protein SecB.